The following is a 424-amino-acid chain: MAKFSALCSLALLGLATAQKPVGTETHEKLTTFRCTVAGGCVEKTNYIVLDSITGHRIYQPAAETLDCGARGAAPNVTACPTKEACAENCAMEGRTDYGSQGVSTDGASLRLQILHDGKKVAPRVYLLDETEAKYEMLRLTGNEFAFEVTMDKLPCGMNSALYLSEMEEDGGKSELNPGGAPWGTGYCDAQCYVTPFINGEGNIKGNGACCAEMDIWEANSRATHIAPHPCSKPGLYLCEGDECGSTGVCDKSGCAWNPNRIAQPHYYGNNDTFKVDTLKPMTVVTQFPTDASGKLAAIRRLYVQGGVVIKAETVHKAGLPEVDALTDPFCEAFGSQRYMALGATGGMGDALARGMVLVMSIWWDETGGNMQWLDGIASGSGPCNATEGAPANIPLVEPNPEVTFSNLKWGEIGSTFQGGARRL.

An N-terminal signal peptide occupies residues 1-18 (MAKFSALCSLALLGLATA). Intrachain disulfides connect cysteine 35-cysteine 41, cysteine 68-cysteine 90, cysteine 80-cysteine 86, cysteine 156-cysteine 384, cysteine 188-cysteine 211, cysteine 192-cysteine 210, cysteine 231-cysteine 250, cysteine 239-cysteine 244, and cysteine 255-cysteine 331. The N-linked (GlcNAc...) asparagine glycan is linked to asparagine 76. Glutamate 213 (nucleophile) is an active-site residue. The active-site Proton donor is glutamate 218. N-linked (GlcNAc...) asparagine glycosylation is found at asparagine 271 and asparagine 385.

This sequence belongs to the glycosyl hydrolase 7 (cellulase C) family. Monomer.

Its subcellular location is the secreted. It carries out the reaction Endohydrolysis of (1-&gt;4)-beta-D-glucosidic linkages in cellulose, lichenin and cereal beta-D-glucans.. Functionally, endoglucanase that is involved in the biological conversion of cellulose to glucose. Hydrolyzes internal beta-1,4-glucosidic bonds. This Pyricularia oryzae (strain 70-15 / ATCC MYA-4617 / FGSC 8958) (Rice blast fungus) protein is Endoglucanase 1.